A 158-amino-acid polypeptide reads, in one-letter code: Fibroblast growth factor 2 (158 aa).

Residues 1–12 constitute a propeptide that is removed on maturation; the sequence is MAAGAAGSITTL. Asn-39 provides a ligand contact to heparin. The heparin-binding stretch occupies residues 131–147; sequence KRTGQYKPGPKTGPGQK.

Belongs to the heparin-binding growth factors family.

Its subcellular location is the secreted. The protein resides in the nucleus. Acts as a ligand for FGFR1, FGFR2, FGFR3 and FGFR4. Also acts as an integrin ligand which is required for FGF2 signaling. Plays an important role in the regulation of cell survival, cell division, cell differentiation and cell migration. Functions as a potent mitogen in vitro. Can induce angiogenesis. The polypeptide is Fibroblast growth factor 2 (FGF2) (Gallus gallus (Chicken)).